Reading from the N-terminus, the 279-residue chain is MSSRYTSSYTPSSRYGSGWDYSSSYSSSRTSRDRDTGSYRDRDYSSTSYTSTRPRYSTYASKYSTDLGKSTDKGMDDYSAAPIAKDEIEELSYDAKTPTTPTEETVDAPREVLQESQISDFVEEDDDQQTEVEEVKLTLASEPEESEEEEDDEDVRKAQELLAASTQIRESSPVSSPVKEVSSAASLFANDNGNETENRTPSPTVLNAKKLGGIPWPPKSSDVKKEGGDAEALPKKRVSDLIARFNTGVVEESKKTDDAYKNEYGAGTNVGKVSTHNFA.

Positions 1-29 are enriched in low complexity; sequence MSSRYTSSYTPSSRYGSGWDYSSSYSSSR. 2 disordered regions span residues 1–111 and 137–233; these read MSSR…APRE and LTLA…AEAL. Over residues 30–44 the composition is skewed to basic and acidic residues; that stretch reads TSRDRDTGSYRDRDY. The segment covering 45-59 has biased composition (low complexity); that stretch reads SSTSYTSTRPRYSTY. The segment covering 142–153 has biased composition (acidic residues); that stretch reads EPEESEEEEDDE. The span at 170–186 shows a compositional bias: low complexity; that stretch reads ESSPVSSPVKEVSSAAS. Positions 189-205 are enriched in polar residues; that stretch reads ANDNGNETENRTPSPTV. Residues 221–233 show a composition bias toward basic and acidic residues; it reads SDVKKEGGDAEAL.

This is an uncharacterized protein from Caenorhabditis elegans.